Consider the following 1710-residue polypeptide: Centrosomal protein of 152 kDa (1710 aa).

Disordered regions lie at residues 1–27 (MSLD…YERE), 39–79 (HDML…NEQM), and 108–139 (NRSK…SKCE). The interaction with PLK4 stretch occupies residues 1–60 (MSLDFGSVALPVQNEDEEYDEEDYEREKELQQLLTDLPHDMLDDDLSSPELQYSDCSEDG). The span at 14-24 (NEDEEYDEEDY) shows a compositional bias: acidic residues. The segment covering 108–123 (NRSKTEDRHPVYHPEE) has biased composition (basic and acidic residues). Residues 234–490 (ENMQIIQLQV…ISLYESAAKL (257 aa)) are a coiled coil. A compositionally biased stretch (basic and acidic residues) spans 587–604 (DEKSIEVETKTDTSEKPK). Positions 587–611 (DEKSIEVETKTDTSEKPKNQLWPES) are disordered. 3 coiled-coil regions span residues 615-664 (DVVR…QDFD), 700-772 (EKQQ…LEKE), and 902-993 (AVSE…INEV). Residues 1120–1142 (ELSKDSASQGTGQGDPGPAAGHH) form a disordered region. Residues 1170–1241 (HCFQELEKAK…LEELQTLCKT (72 aa)) are a coiled coil. The residue at position 1241 (threonine 1241) is a Phosphothreonine.

The protein belongs to the CEP152 family. As to quaternary structure, interacts (via N-terminus) with PLK4; the interaction is mutally exclusive with a PLK4:CEP192 interaction. Interacts (via C-terminus) with CPAP (via-N-terminus). Interacts with CINP. Interacts with CDK5RAP2, WDR62, CEP63 and CEP131. CEP63, CDK5RAP2, CEP152, WDR62 are proposed to form a stepwise assembled complex at the centrosome forming a ring near parental centrioles. Interacts with DEUP1; this interaction recruits CEP152 to the deuterosome. The interactions with CEP63 and DEUP1 are mutually exclusive. Interacts with CCDC66.

The protein localises to the cytoplasm. It is found in the cytoskeleton. It localises to the microtubule organizing center. Its subcellular location is the centrosome. The protein resides in the centriole. In terms of biological role, necessary for centrosome duplication; the function also seems to involve CEP63, CDK5RAP2 and WDR62 through a stepwise assembled complex at the centrosome that recruits CDK2 required for centriole duplication. Acts as a molecular scaffold facilitating the interaction of PLK4 and CPAP, 2 molecules involved in centriole formation. Proposed to snatch PLK4 away from PLK4:CEP92 complexes in early G1 daughter centriole and to reposition PLK4 at the outer boundary of a newly forming CEP152 ring structure. Also plays a key role in deuterosome-mediated centriole amplification in multiciliated that can generate more than 100 centrioles. Overexpression of CEP152 can drive amplification of centrioles. The chain is Centrosomal protein of 152 kDa from Homo sapiens (Human).